The primary structure comprises 358 residues: Probable tartrate dehydrogenase/decarboxylase TtuC' (358 aa).

Positions 222, 246, and 250 each coordinate Mn(2+).

This sequence belongs to the isocitrate and isopropylmalate dehydrogenases family. The cofactor is Mg(2+). Requires Mn(2+) as cofactor. K(+) is required as a cofactor.

The protein localises to the cytoplasm. The catalysed reaction is tartrate + NAD(+) = 2-hydroxy-3-oxosuccinate + NADH + H(+). The enzyme catalyses (2R,3S)-tartrate + NAD(+) = 2-hydroxy-3-oxosuccinate + NADH + H(+). It carries out the reaction (2R,3R)-tartrate + NAD(+) = 2-hydroxy-3-oxosuccinate + NADH + H(+). It catalyses the reaction (2R,3R)-tartrate + H(+) = (R)-glycerate + CO2. The catalysed reaction is (R)-malate + NAD(+) = pyruvate + CO2 + NADH. It participates in carbohydrate acid metabolism; tartrate degradation; 2-hydroxy-3-oxosuccinate from L-tartrate: step 1/1. The protein operates within carbohydrate acid metabolism; tartrate degradation; 2-hydroxy-3-oxosuccinate from meso-tartrate: step 1/1. Its pathway is carbohydrate acid metabolism; tartrate degradation; D-glycerate from L-tartrate: step 1/1. In terms of biological role, has multiple catalytic activities. Apart from catalyzing the oxidation of (+)-tartrate to oxaloglycolate, also converts meso-tartrate to D-glycerate and catalyzes the oxidative decarboxylation of D-malate to pyruvate. This chain is Probable tartrate dehydrogenase/decarboxylase TtuC' (ttuC'), found in Agrobacterium vitis (Rhizobium vitis).